The primary structure comprises 218 residues: Ras-related protein RabO (218 aa).

Residue 15–22 (GDYCVGKT) coordinates GTP. The short motif at 37 to 45 (RNCNIGVDF) is the Effector region element. GTP contacts are provided by residues 63-67 (DTGGQ) and 122-125 (NKID). Cys215 is subject to Cysteine methyl ester. Residue Cys215 is the site of S-geranylgeranyl cysteine attachment. Positions 216 to 218 (FIL) are cleaved as a propeptide — removed in mature form.

It belongs to the small GTPase superfamily. Rab family.

The protein resides in the cell membrane. This chain is Ras-related protein RabO (rabO), found in Dictyostelium discoideum (Social amoeba).